The sequence spans 332 residues: CXADR-like membrane protein (332 aa).

The N-terminal stretch at 1–19 is a signal peptide; it reads MHTLIRSFLGLWYVLGALA. Ig-like C2-type domains are found at residues 20–123 and 130–220; these read QTEI…SFIT and PSEL…VDVT. Over 20–231 the chain is Extracellular; that stretch reads QTEIKLVADE…QSVSNTGILA (212 aa). 2 disulfide bridges follow: C35/C109 and C151/C204. An N-linked (GlcNAc...) asparagine glycan is attached at N193. Residues 232–252 traverse the membrane as a helical segment; that stretch reads GVACGVVVGVFLIFFTVWLLF. The Cytoplasmic portion of the chain corresponds to 253 to 332; that stretch reads HKKEFKKREE…EQRHHCLEKI (80 aa). Residues 276–332 are disordered; sequence PKARLVKPGSSSSDSRSSQSGSSSTRSTTNSASRSQRTHSTQETPHGEQRHHCLEKI. Residues 285 to 310 are compositionally biased toward low complexity; the sequence is SSSSDSRSSQSGSSSTRSTTNSASRS. Over residues 320 to 332 the composition is skewed to basic and acidic residues; the sequence is PHGEQRHHCLEKI.

The protein localises to the cell junction. It localises to the tight junction. It is found in the cell membrane. This Xenopus tropicalis (Western clawed frog) protein is CXADR-like membrane protein (clmp).